A 71-amino-acid chain; its full sequence is Small ribosomal subunit protein bS21 (71 aa).

Residues 48–59 (EKASLAKRHAKR) are compositionally biased toward basic residues. The tract at residues 48-71 (EKASLAKRHAKRNFRENARNTRLY) is disordered. The segment covering 60–71 (NFRENARNTRLY) has biased composition (basic and acidic residues).

It belongs to the bacterial ribosomal protein bS21 family.

In Glaesserella parasuis serovar 5 (strain SH0165) (Haemophilus parasuis), this protein is Small ribosomal subunit protein bS21.